Consider the following 526-residue polypeptide: Peptide chain release factor 3 (526 aa).

Residues 9–277 (NKRRTFAIIS…DFVEYAPGPQ (269 aa)) form the tr-type G domain. GTP contacts are provided by residues 18–25 (SHPDAGKT), 86–90 (DTPGH), and 140–143 (NKLD).

The protein belongs to the TRAFAC class translation factor GTPase superfamily. Classic translation factor GTPase family. PrfC subfamily.

The protein localises to the cytoplasm. In terms of biological role, increases the formation of ribosomal termination complexes and stimulates activities of RF-1 and RF-2. It binds guanine nucleotides and has strong preference for UGA stop codons. It may interact directly with the ribosome. The stimulation of RF-1 and RF-2 is significantly reduced by GTP and GDP, but not by GMP. The sequence is that of Peptide chain release factor 3 from Legionella pneumophila (strain Corby).